An 831-amino-acid chain; its full sequence is Probable glucan 1,3-beta-glucosidase D (831 aa).

6 stretches are compositionally biased toward basic and acidic residues: residues 1–24, 44–56, 79–93, 102–115, 137–151, and 198–213; these read MPSHSRSRDRYRGERDPSRRYREV, RRDDYQHDIRSHE, RSHDVEGRRRERSRA, SRRDRNRGGEEYRR, RDGQRARPRDMDREA, and QRERSQEQEQPRLESK. Disordered regions lie at residues 1 to 179 and 192 to 241; these read MPSH…SGSH and HYDE…GQSK. Residues 1–297 are Cytoplasmic-facing; that stretch reads MPSHSRSRDR…AQPPFWKRKK (297 aa). A helical; Signal-anchor for type II membrane protein membrane pass occupies residues 298–318; sequence WWIVIGVLVVVLAIVIPVAVV. The Extracellular portion of the chain corresponds to 319–831; that stretch reads MSKKHGHDDD…PSFGDLPEYY (513 aa). N-linked (GlcNAc...) asparagine glycans are attached at residues N376, N381, N393, N410, N442, N546, and N558. E597 functions as the Proton donor in the catalytic mechanism. Residues N610, N636, N669, and N689 are each glycosylated (N-linked (GlcNAc...) asparagine). The Nucleophile role is filled by E702.

It belongs to the glycosyl hydrolase 5 (cellulase A) family.

It is found in the cell membrane. It catalyses the reaction Successive hydrolysis of beta-D-glucose units from the non-reducing ends of (1-&gt;3)-beta-D-glucans, releasing alpha-glucose.. In terms of biological role, glucosidase involved in the degradation of cellulosic biomass. Active on lichenan. The protein is Probable glucan 1,3-beta-glucosidase D (exgD) of Aspergillus flavus (strain ATCC 200026 / FGSC A1120 / IAM 13836 / NRRL 3357 / JCM 12722 / SRRC 167).